The chain runs to 129 residues: UPF0344 protein SAB0838 (129 aa).

The next 4 membrane-spanning stretches (helical) occupy residues 1-21 (MLHL…ATYL), 36-56 (LHMV…WILI), 67-87 (MLLT…EVSI), and 99-119 (MFWI…ILPL).

It belongs to the UPF0344 family.

It is found in the cell membrane. The protein is UPF0344 protein SAB0838 of Staphylococcus aureus (strain bovine RF122 / ET3-1).